The primary structure comprises 225 residues: Cytidylate kinase (225 aa).

Residue 11–19 (GPAAAGKST) participates in ATP binding.

The protein belongs to the cytidylate kinase family. Type 1 subfamily.

The protein localises to the cytoplasm. It carries out the reaction CMP + ATP = CDP + ADP. The catalysed reaction is dCMP + ATP = dCDP + ADP. The chain is Cytidylate kinase from Bacillus cereus (strain B4264).